The following is a 286-amino-acid chain: MERPVRVKAWVEENRGSFLPPVCNKLLHQKQLKIMFVGGPNTRKDYHIEEGEEVFYQLEGDMLLRVLERGKHRDVVIRQGEIFLLPAGVPHSPQRFANTVGLVIERRRLKTELDGLRYYVGDTTDVLFEKWFYCEDLGTQLAPIIQEFFSSEQYRTGKPNPDQLLKEPPFPLSTRSVMEPMCLEAWLDGHRKELQAGTPLSLFGDTYESQVMVHGQGSSEGLRRDVDVWLWQLEGSSVVTMEGQRLSLTLDDSLLVPAGTLYGWERGQGSVALSVTQDPACKKSLG.

The segment at 1–160 (MERPVRVKAW…SEQYRTGKPN (160 aa)) is domain A (catalytic). An O2-binding site is contributed by Arg-43. The Fe cation site is built by His-47, Glu-53, and His-91. Residue Glu-53 participates in substrate binding. Substrate is bound by residues Arg-95 and Glu-105. Residues 161–177 (PDQLLKEPPFPLSTRSV) are linker. The segment at 178–286 (MEPMCLEAWL…QDPACKKSLG (109 aa)) is domain B.

This sequence belongs to the 3-HAO family. As to quaternary structure, monomer. Requires Fe(2+) as cofactor.

It localises to the cytoplasm. The protein localises to the cytosol. The enzyme catalyses 3-hydroxyanthranilate + O2 = (2Z,4Z)-2-amino-3-carboxymuconate 6-semialdehyde. Its pathway is cofactor biosynthesis; NAD(+) biosynthesis; quinolinate from L-kynurenine: step 3/3. In terms of biological role, catalyzes the oxidative ring opening of 3-hydroxyanthranilate to 2-amino-3-carboxymuconate semialdehyde, which spontaneously cyclizes to quinolinate. In Bos taurus (Bovine), this protein is 3-hydroxyanthranilate 3,4-dioxygenase.